The primary structure comprises 198 residues: Ribosomal RNA small subunit methyltransferase G (198 aa).

S-adenosyl-L-methionine contacts are provided by residues G74, F79, 123 to 124 (IQ), and R136.

This sequence belongs to the methyltransferase superfamily. RNA methyltransferase RsmG family.

The protein resides in the cytoplasm. It carries out the reaction guanosine(527) in 16S rRNA + S-adenosyl-L-methionine = N(7)-methylguanosine(527) in 16S rRNA + S-adenosyl-L-homocysteine. In terms of biological role, specifically methylates the N7 position of guanine in position 527 of 16S rRNA. The chain is Ribosomal RNA small subunit methyltransferase G from Orientia tsutsugamushi (strain Boryong) (Rickettsia tsutsugamushi).